Reading from the N-terminus, the 438-residue chain is Argininosuccinate lyase (438 aa).

The protein belongs to the lyase 1 family. Argininosuccinate lyase subfamily.

It is found in the cytoplasm. It catalyses the reaction 2-(N(omega)-L-arginino)succinate = fumarate + L-arginine. Its pathway is amino-acid biosynthesis; L-arginine biosynthesis; L-arginine from L-ornithine and carbamoyl phosphate: step 3/3. The chain is Argininosuccinate lyase from Clostridium kluyveri (strain NBRC 12016).